The chain runs to 69 residues: Cytochrome c oxidase subunit 8A, mitochondrial (69 aa).

A mitochondrion-targeting transit peptide spans 1-25; sequence MSVLTPLLLRGLTGSARRLPVPRAK. The SIFI-degron signature appears at 2 to 19; sequence SVLTPLLLRGLTGSARRL. The Mitochondrial matrix portion of the chain corresponds to 26 to 36; sequence IHSLPPDEKLG. A helical transmembrane segment spans residues 37-60; it reads IMELAVGLTSCFVTFLLPAGWILS. The Mitochondrial intermembrane segment spans residues 61-69; it reads HLETYRRPE.

This sequence belongs to the cytochrome c oxidase VIII family. As to quaternary structure, component of the cytochrome c oxidase (complex IV, CIV), a multisubunit enzyme composed of 14 subunits. The complex is composed of a catalytic core of 3 subunits MT-CO1, MT-CO2 and MT-CO3, encoded in the mitochondrial DNA, and 11 supernumerary subunits COX4I, COX5A, COX5B, COX6A, COX6B, COX6C, COX7A, COX7B, COX7C, COX8 and NDUFA4, which are encoded in the nuclear genome. The complex exists as a monomer or a dimer and forms supercomplexes (SCs) in the inner mitochondrial membrane with NADH-ubiquinone oxidoreductase (complex I, CI) and ubiquinol-cytochrome c oxidoreductase (cytochrome b-c1 complex, complex III, CIII), resulting in different assemblies (supercomplex SCI(1)III(2)IV(1) and megacomplex MCI(2)III(2)IV(2)). In response to mitochondrial stress, the precursor protein is ubiquitinated by the SIFI complex in the cytoplasm before mitochondrial import, leading to its degradation. Within the SIFI complex, UBR4 initiates ubiquitin chain that are further elongated or branched by KCMF1.

It is found in the mitochondrion inner membrane. The protein operates within energy metabolism; oxidative phosphorylation. Component of the cytochrome c oxidase, the last enzyme in the mitochondrial electron transport chain which drives oxidative phosphorylation. The respiratory chain contains 3 multisubunit complexes succinate dehydrogenase (complex II, CII), ubiquinol-cytochrome c oxidoreductase (cytochrome b-c1 complex, complex III, CIII) and cytochrome c oxidase (complex IV, CIV), that cooperate to transfer electrons derived from NADH and succinate to molecular oxygen, creating an electrochemical gradient over the inner membrane that drives transmembrane transport and the ATP synthase. Cytochrome c oxidase is the component of the respiratory chain that catalyzes the reduction of oxygen to water. Electrons originating from reduced cytochrome c in the intermembrane space (IMS) are transferred via the dinuclear copper A center (CU(A)) of subunit 2 and heme A of subunit 1 to the active site in subunit 1, a binuclear center (BNC) formed by heme A3 and copper B (CU(B)). The BNC reduces molecular oxygen to 2 water molecules using 4 electrons from cytochrome c in the IMS and 4 protons from the mitochondrial matrix. The protein is Cytochrome c oxidase subunit 8A, mitochondrial (COX8A) of Gorilla gorilla gorilla (Western lowland gorilla).